A 594-amino-acid polypeptide reads, in one-letter code: Proteasome-associated ATPase (594 aa).

The stretch at 20–98 (DDLAAQVTYL…KEEIDRLAQP (79 aa)) forms a coiled coil. 282 to 287 (GCGKTL) serves as a coordination point for ATP. The docks into pockets in the proteasome alpha-ring stretch occupies residues 593–594 (YL).

This sequence belongs to the AAA ATPase family. Homohexamer. Assembles into a hexameric ring structure that caps the 20S proteasome core. Strongly interacts with the prokaryotic ubiquitin-like protein Pup through a hydrophobic interface; the interacting region of ARC lies in its N-terminal coiled-coil domain. There is one Pup binding site per ARC hexamer ring. Upon ATP-binding, the C-terminus of ARC interacts with the alpha-rings of the proteasome core, possibly by binding to the intersubunit pockets.

The protein operates within protein degradation; proteasomal Pup-dependent pathway. Functionally, ATPase which is responsible for recognizing, binding, unfolding and translocation of pupylated proteins into the bacterial 20S proteasome core particle. May be essential for opening the gate of the 20S proteasome via an interaction with its C-terminus, thereby allowing substrate entry and access to the site of proteolysis. Thus, the C-termini of the proteasomal ATPase may function like a 'key in a lock' to induce gate opening and therefore regulate proteolysis. The polypeptide is Proteasome-associated ATPase (Catenulispora acidiphila (strain DSM 44928 / JCM 14897 / NBRC 102108 / NRRL B-24433 / ID139908)).